The primary structure comprises 125 residues: UPF0763 protein NAMH_0545 (125 aa).

Belongs to the UPF0763 family.

The polypeptide is UPF0763 protein NAMH_0545 (Nautilia profundicola (strain ATCC BAA-1463 / DSM 18972 / AmH)).